Here is a 450-residue protein sequence, read N- to C-terminus: Vacuolar cation/proton exchanger 1c (450 aa).

Residues 1 to 73 (MAPPESSHHH…LLGGPAAQLQ (73 aa)) lie on the Cytoplasmic side of the membrane. The segment at 28-52 (AAEEEEKKEAAAWTPSSSSSMTGRK) is disordered. A helical membrane pass occupies residues 74 to 94 (EVLLGTKLYPLFSAVPLAVAA). The Extracellular segment spans residues 95–101 (ESLRLGR). Residues 102–122 (VWVFAFSLIGLAPLAERVSFL) traverse the membrane as a helical segment. The Cytoplasmic segment spans residues 123 to 134 (SEHIANTVGPTA). A helical membrane pass occupies residues 135 to 155 (GGIMNATCGNVPELIIALFAL). The cation selection stretch occupies residues 143-178 (GNVPELIIALFALHKNKMEILKWSLLGSILSNLLLV). Over 156–170 (HKNKMEILKWSLLGS) the chain is Extracellular. A helical membrane pass occupies residues 171-191 (ILSNLLLVLGSSLLFGGIVNI). Over 192–201 (GKERPLDKRQ) the chain is Cytoplasmic. Residues 202-222 (ADVSIGLLLLGVLCHIATLVS) form a helical membrane-spanning segment. At 223–239 (KYTSSTGDSINSSSVMQ) the chain is on the extracellular side. Residues 240–260 (LSRSCAIVMLIAYFGSLMFQL) traverse the membrane as a helical segment. The Cytoplasmic segment spans residues 261–287 (KTHRQIFELEEDSSDSSSSEDDATDKS). A helical transmembrane segment spans residues 288 to 308 (VIGFASAMVWLIGMAVVTAML). Over 309–331 (SSYVVTTIEEASESMGIPVRFIS) the chain is Extracellular. Residues 332–352 (IILLPIVGNAAEHAGAIIFAF) form a helical membrane-spanning segment. A cation selection region spans residues 339-374 (GNAAEHAGAIIFAFKNKIDISLGITLGSATQISMLV). The Cytoplasmic segment spans residues 353–360 (KNKIDISL). Residues 361–381 (GITLGSATQISMLVVPVILIV) traverse the membrane as a helical segment. At 382–385 (SWVN) the chain is on the extracellular side. The helical transmembrane segment at 386–406 (AIPMDLDFNLLETGSLAMAVI) threads the bilayer. Residues 407–424 (TTAFTLQDDKWHYLKGLN) lie on the Cytoplasmic side of the membrane. The helical transmembrane segment at 425–445 (LVFSYIVIAVCFFVMKALPTL) threads the bilayer. Topologically, residues 446 to 450 (KKEDD) are extracellular.

Belongs to the Ca(2+):cation antiporter (CaCA) (TC 2.A.19) family. Cation/proton exchanger (CAX) subfamily. As to expression, expressed in leaf blades.

It is found in the vacuole membrane. In terms of biological role, vacuolar cation/proton exchanger (CAX). Translocates Ca(2+) and other metal ions into vacuoles using the proton gradient formed by H(+)-ATPase and H(+)-pyrophosphatase. In Oryza sativa subsp. japonica (Rice), this protein is Vacuolar cation/proton exchanger 1c (CAX1c).